Here is a 254-residue protein sequence, read N- to C-terminus: MYKKKIKKNTITHFGFQNVPTFIKSYLVSNVFHKVATKYDLMNDLMSFGIHRIWKQFLIQQSEVHNGYKVLDLAGGTGDLSIKFSKLVGKKGIVILLDNNDTMLRLGQKKLRNLGILNNVHYIQANAEFLPFSENTFNCVAISFGLRNFTYKQKSLYEIYRVLRPGGKLLILDFSIPTSKLLTILYDLYSFHIIPKIGKIIAQDSKSYQYLVESIRMHPDQETLKNMILSIGFNDVQYFNMTGGIAALHCAYKY.

S-adenosyl-L-methionine contacts are provided by residues Thr77, Asp98, 126-127, and Ser143; that span reads NA.

It belongs to the class I-like SAM-binding methyltransferase superfamily. MenG/UbiE family.

The catalysed reaction is a 2-demethylmenaquinol + S-adenosyl-L-methionine = a menaquinol + S-adenosyl-L-homocysteine + H(+). It carries out the reaction a 2-methoxy-6-(all-trans-polyprenyl)benzene-1,4-diol + S-adenosyl-L-methionine = a 5-methoxy-2-methyl-3-(all-trans-polyprenyl)benzene-1,4-diol + S-adenosyl-L-homocysteine + H(+). It functions in the pathway quinol/quinone metabolism; menaquinone biosynthesis; menaquinol from 1,4-dihydroxy-2-naphthoate: step 2/2. The protein operates within cofactor biosynthesis; ubiquinone biosynthesis. Its function is as follows. Methyltransferase required for the conversion of demethylmenaquinol (DMKH2) to menaquinol (MKH2) and the conversion of 2-polyprenyl-6-methoxy-1,4-benzoquinol (DDMQH2) to 2-polyprenyl-3-methyl-6-methoxy-1,4-benzoquinol (DMQH2). This Blochmanniella floridana protein is Ubiquinone/menaquinone biosynthesis C-methyltransferase UbiE.